The chain runs to 211 residues: Glycerol-3-phosphate acyltransferase (211 aa).

5 consecutive transmembrane segments (helical) span residues Y8–T28, L84–F104, V116–A136, A145–L165, and L170–L190.

The protein belongs to the PlsY family. Probably interacts with PlsX.

It is found in the cell inner membrane. It catalyses the reaction an acyl phosphate + sn-glycerol 3-phosphate = a 1-acyl-sn-glycero-3-phosphate + phosphate. Its pathway is lipid metabolism; phospholipid metabolism. In terms of biological role, catalyzes the transfer of an acyl group from acyl-phosphate (acyl-PO(4)) to glycerol-3-phosphate (G3P) to form lysophosphatidic acid (LPA). This enzyme utilizes acyl-phosphate as fatty acyl donor, but not acyl-CoA or acyl-ACP. This chain is Glycerol-3-phosphate acyltransferase, found in Granulibacter bethesdensis (strain ATCC BAA-1260 / CGDNIH1).